The primary structure comprises 266 residues: Putative hydro-lyase Jann_2570 (266 aa).

The protein belongs to the D-glutamate cyclase family.

In Jannaschia sp. (strain CCS1), this protein is Putative hydro-lyase Jann_2570.